The chain runs to 451 residues: uncharacterized protein (451 aa).

The region spanning 2-60 (NVVLKQRIPLKIKRMGINGEGIGFYKKTLIFVPGALKGEEVFCQISSVRRNFAEAKLLK) is the TRAM domain. [4Fe-4S] cluster contacts are provided by cysteine 73, cysteine 79, cysteine 82, and cysteine 162. S-adenosyl-L-methionine contacts are provided by glutamine 283, tyrosine 312, aspartate 333, and aspartate 381. Cysteine 408 acts as the Nucleophile in catalysis.

The protein belongs to the class I-like SAM-binding methyltransferase superfamily. RNA M5U methyltransferase family.

This is an uncharacterized protein from Streptococcus agalactiae serotype III (strain NEM316).